A 668-amino-acid polypeptide reads, in one-letter code: Threonine--tRNA ligase (668 aa).

One can recognise a TGS domain in the interval 1–64 (MSQAISLTFP…TDGKIEIITR (64 aa)). The catalytic stretch occupies residues 245–553 (DHRKLGREMD…LIENFAGHMP (309 aa)). Zn(2+) is bound by residues cysteine 347, histidine 398, and histidine 530.

This sequence belongs to the class-II aminoacyl-tRNA synthetase family. As to quaternary structure, homodimer. It depends on Zn(2+) as a cofactor.

Its subcellular location is the cytoplasm. It catalyses the reaction tRNA(Thr) + L-threonine + ATP = L-threonyl-tRNA(Thr) + AMP + diphosphate + H(+). Its function is as follows. Catalyzes the attachment of threonine to tRNA(Thr) in a two-step reaction: L-threonine is first activated by ATP to form Thr-AMP and then transferred to the acceptor end of tRNA(Thr). Also edits incorrectly charged L-seryl-tRNA(Thr). The chain is Threonine--tRNA ligase from Rhizobium etli (strain CIAT 652).